A 426-amino-acid chain; its full sequence is Enolase (426 aa).

Residue Gln163 participates in (2R)-2-phosphoglycerate binding. The Proton donor role is filled by Glu205. Asp242, Glu286, and Asp313 together coordinate Mg(2+). (2R)-2-phosphoglycerate-binding residues include Lys338, Arg367, Ser368, and Lys389. Lys338 (proton acceptor) is an active-site residue.

This sequence belongs to the enolase family. The cofactor is Mg(2+).

It is found in the cytoplasm. The protein localises to the secreted. It localises to the cell surface. The enzyme catalyses (2R)-2-phosphoglycerate = phosphoenolpyruvate + H2O. It participates in carbohydrate degradation; glycolysis; pyruvate from D-glyceraldehyde 3-phosphate: step 4/5. Functionally, catalyzes the reversible conversion of 2-phosphoglycerate (2-PG) into phosphoenolpyruvate (PEP). It is essential for the degradation of carbohydrates via glycolysis. This chain is Enolase, found in Helicobacter pylori (strain Shi470).